The following is a 733-amino-acid chain: Lanosterol synthase (733 aa).

N-acetylthreonine is present on Thr-2. One copy of the PFTB 1 repeat lies at 125-166 (REEMVRYLRSVQLPDGGWGLHIEDKSTVFGTALNYVALRILG). Asp-456 serves as the catalytic Proton donor. PFTB repeat units lie at residues 484 to 529 (LCDA…MIDY), 561 to 601 (LNQG…ACMG), and 613 to 654 (VAQA…HSTC).

This sequence belongs to the terpene cyclase/mutase family. As to quaternary structure, monomer.

The protein localises to the endoplasmic reticulum membrane. It carries out the reaction (S)-2,3-epoxysqualene = lanosterol. Its pathway is terpene metabolism; lanosterol biosynthesis; lanosterol from farnesyl diphosphate: step 3/3. In terms of biological role, key enzyme in the cholesterol biosynthesis pathway. Catalyzes the cyclization of (S)-2,3 oxidosqualene to lanosterol, a reaction that forms the sterol nucleus. Through the production of lanosterol may regulate lens protein aggregation and increase transparency. This chain is Lanosterol synthase, found in Mus musculus (Mouse).